A 134-amino-acid polypeptide reads, in one-letter code: Protein OPG030 (134 aa).

A BACK domain is found at 88 to 133 (YKENGLRNSFLRQYINNNIEEIRNTDQFLKFDVDSVCDILNNDETI).

This sequence belongs to the orthopoxvirus OPG030 family.

The chain is Protein OPG030 (OPG30) from Variola virus (isolate Human/India/Ind3/1967) (VARV).